A 124-amino-acid polypeptide reads, in one-letter code: uncharacterized protein (124 aa).

The protein localises to the cytoplasm. Its subcellular location is the nucleus. This is an uncharacterized protein from Schizosaccharomyces pombe (strain 972 / ATCC 24843) (Fission yeast).